The following is a 150-amino-acid chain: 3-dehydroquinate dehydratase (150 aa).

The active-site Proton acceptor is the Tyr-26. Residues Asn-77, His-83, and Asp-90 each coordinate substrate. The active-site Proton donor is His-103. Substrate is bound by residues 104-105 and Arg-114; that span reads LS.

This sequence belongs to the type-II 3-dehydroquinase family. In terms of assembly, homododecamer.

The catalysed reaction is 3-dehydroquinate = 3-dehydroshikimate + H2O. It participates in metabolic intermediate biosynthesis; chorismate biosynthesis; chorismate from D-erythrose 4-phosphate and phosphoenolpyruvate: step 3/7. Functionally, catalyzes a trans-dehydration via an enolate intermediate. The sequence is that of 3-dehydroquinate dehydratase from Yersinia pseudotuberculosis serotype O:1b (strain IP 31758).